The chain runs to 492 residues: Cysteine--tRNA ligase (492 aa).

Cys27 serves as a coordination point for Zn(2+). The 'HIGH' region signature appears at 29–39 (VTVYDLCHLGH). 3 residues coordinate Zn(2+): Cys211, His236, and Glu240. The 'KMSKS' region motif lies at 268–272 (KMSKS). Residue Lys271 coordinates ATP.

Belongs to the class-I aminoacyl-tRNA synthetase family. In terms of assembly, monomer. The cofactor is Zn(2+).

The protein resides in the cytoplasm. The catalysed reaction is tRNA(Cys) + L-cysteine + ATP = L-cysteinyl-tRNA(Cys) + AMP + diphosphate. This chain is Cysteine--tRNA ligase, found in Prochlorococcus marinus (strain MIT 9515).